The chain runs to 237 residues: Prospore formation at selected spindle poles protein 1 (237 aa).

Its subcellular location is the nucleus. It is found in the cytoplasm. The protein resides in the cytoskeleton. It localises to the microtubule organizing center. The protein localises to the spindle pole body. Functionally, involved in the pathway that organizes the shaping and sizing of the prospore membrane (PSM) during sporulation. Required to localize MPC54 to all four spindle pole bodies, and localize DON1 and SPO14 to four prospore membranes. The polypeptide is Prospore formation at selected spindle poles protein 1 (PFS1) (Saccharomyces cerevisiae (strain ATCC 204508 / S288c) (Baker's yeast)).